The following is a 494-amino-acid chain: MTIRTRVAPSPTGDPHLGTAYIALFNYCFAKQQGGEFVLRIEDTDQVRSTAESEQAIMDSLRWLGLEWDHGPDVGGEFGPYRQSERSDLYKKYAHQLVDDGKAFYCFATSEELDKMREEQMAEGLRPKYDGRGLNHTDDEIKANLAAGKPYVIRMKIPSEGTFKFNDYLRDEIEIPWENVDMQVLLKADGFPTYFLANVVDDHHMQISHIFRGEEWINSAPKLLKLYEDFGWEAPVLGHLPLLRNPDKSKLSKRKNPTSINYYKEMGYLPEAVLNYLGRMGWSMPDEREKFTLNEMIENFDMKRVSLGGPVFDVDKLSWLNGMWIRENLTDEQLIQRFVDWKFNGEMLAKVLPEAKARINTLSDLVDLAGHFVGGIPTYDPALLTAGKADEDVIRQALQFFVWQLEGLRSFDKPAIFAIAKEVATFHELKIKDFLEPIFVAITGKTSSTSVLDAMEILGSDLSRARLRVALAHLGISKKQAKNIERAYREYPSA.

The short motif at 9-19 (PSPTGDPHLGT) is the 'HIGH' region element. Positions 250–254 (KLSKR) match the 'KMSKS' region motif. K253 contacts ATP.

It belongs to the class-I aminoacyl-tRNA synthetase family. Glutamate--tRNA ligase type 1 subfamily. As to quaternary structure, monomer.

The protein resides in the cytoplasm. It carries out the reaction tRNA(Glu) + L-glutamate + ATP = L-glutamyl-tRNA(Glu) + AMP + diphosphate. Functionally, catalyzes the attachment of glutamate to tRNA(Glu) in a two-step reaction: glutamate is first activated by ATP to form Glu-AMP and then transferred to the acceptor end of tRNA(Glu). The sequence is that of Glutamate--tRNA ligase from Pseudoalteromonas translucida (strain TAC 125).